We begin with the raw amino-acid sequence, 332 residues long: L-lactate dehydrogenase A chain (332 aa).

Residue Ala-2 is modified to N-acetylalanine. The residue at position 5 (Lys-5) is an N6-acetyllysine; alternate. The residue at position 5 (Lys-5) is an N6-succinyllysine; alternate. The residue at position 10 (Tyr-10) is a Phosphotyrosine. Lys-14 carries the post-translational modification N6-acetyllysine. A Phosphothreonine modification is found at Thr-18. 29 to 57 lines the NAD(+) pocket; it reads GAVGMACAISILMKDLADELALVDVIEDK. Residue Lys-57 is modified to N6-acetyllysine; alternate. A Glycyl lysine isopeptide (Lys-Gly) (interchain with G-Cter in SUMO2); alternate cross-link involves residue Lys-57. Position 81 is an N6-acetyllysine (Lys-81). Arg-99 lines the NAD(+) pocket. Arg-106 serves as a coordination point for substrate. At Lys-118 the chain carries N6-acetyllysine; alternate. Position 118 is an N6-succinyllysine; alternate (Lys-118). At Lys-126 the chain carries N6-acetyllysine. Residue Asn-138 participates in NAD(+) binding. Residues Asn-138 and Arg-169 each contribute to the substrate site. His-193 (proton acceptor) is an active-site residue. N6-acetyllysine is present on residues Lys-224 and Lys-232. Tyr-239 is subject to Phosphotyrosine. Lys-243 is modified (N6-acetyllysine). Thr-248 serves as a coordination point for substrate. Residue Thr-309 is modified to Phosphothreonine. Residue Ser-310 is modified to Phosphoserine. The residue at position 318 (Lys-318) is an N6-acetyllysine; alternate. Lys-318 carries the N6-succinyllysine; alternate modification. Phosphothreonine is present on Thr-322.

Belongs to the LDH/MDH superfamily. LDH family. As to quaternary structure, homotetramer. Interacts with PTEN upstream reading frame protein MP31. Interacts with folliculin FLCN; the interaction is direct and inhibits enzymatic activity. ISGylated. Predominantly expressed in anaerobic tissues such as skeletal muscle and liver.

The protein localises to the cytoplasm. It catalyses the reaction (S)-lactate + NAD(+) = pyruvate + NADH + H(+). It functions in the pathway fermentation; pyruvate fermentation to lactate; (S)-lactate from pyruvate: step 1/1. Fermentation of pyruvate to lactate is inhibited when bound to folliculin FLCN, perhaps partly by FLCN preventing binding of cofactor NADH. Its function is as follows. Interconverts simultaneously and stereospecifically pyruvate and lactate with concomitant interconversion of NADH and NAD(+). The sequence is that of L-lactate dehydrogenase A chain from Homo sapiens (Human).